Consider the following 124-residue polypeptide: Urease subunit beta (124 aa).

This sequence belongs to the urease beta subunit family. Heterotrimer of UreA (gamma), UreB (beta) and UreC (alpha) subunits. Three heterotrimers associate to form the active enzyme.

The protein resides in the cytoplasm. It catalyses the reaction urea + 2 H2O + H(+) = hydrogencarbonate + 2 NH4(+). Its pathway is nitrogen metabolism; urea degradation; CO(2) and NH(3) from urea (urease route): step 1/1. The polypeptide is Urease subunit beta (Ureaplasma parvum serovar 3 (strain ATCC 27815 / 27 / NCTC 11736)).